A 169-amino-acid chain; its full sequence is Large ribosomal subunit protein uL10 (169 aa).

Belongs to the universal ribosomal protein uL10 family. In terms of assembly, part of the ribosomal stalk of the 50S ribosomal subunit. The N-terminus interacts with L11 and the large rRNA to form the base of the stalk. The C-terminus forms an elongated spine to which L12 dimers bind in a sequential fashion forming a multimeric L10(L12)X complex.

Its function is as follows. Forms part of the ribosomal stalk, playing a central role in the interaction of the ribosome with GTP-bound translation factors. The sequence is that of Large ribosomal subunit protein uL10 from Orientia tsutsugamushi (strain Ikeda) (Rickettsia tsutsugamushi).